We begin with the raw amino-acid sequence, 160 residues long: uncharacterized protein (160 aa).

Positions 1–29 (MTGKTHIMGGIASCTAAAYYYGFDPVLMA) are cleaved as a signal peptide. The next 2 helical transmembrane spans lie at 67–87 (TFTHSLLFMLIMFFITSTYIP) and 137–157 (QLVLAGLTLASCYYFYMLFHG).

This sequence to E.coli YdjM.

Its subcellular location is the cell membrane. This is an uncharacterized protein from Bacillus subtilis (strain 168).